A 229-amino-acid polypeptide reads, in one-letter code: Interleukin-22 receptor subunit alpha-2 (229 aa).

The first 19 residues, 1–19, serve as a signal peptide directing secretion; the sequence is MPKHCFLGLLIMLLTTATE. 2 consecutive Fibronectin type-III domains span residues 28–127 and 128–229; these read KPQK…TKLD and PPVV…VQIP. Asn-54 is a glycosylation site (N-linked (GlcNAc...) asparagine). Intrachain disulfides connect Cys-76/Cys-84 and Cys-204/Cys-225.

It belongs to the type II cytokine receptor family.

It is found in the secreted. Receptor for IL22. Binds to IL22, prevents interaction with the functional IL-22R complex and blocks the activity of IL22 (in vitro). May play an important role as an IL22 antagonist in the regulation of inflammatory responses. The protein is Interleukin-22 receptor subunit alpha-2 (Il22ra2) of Rattus norvegicus (Rat).